A 201-amino-acid polypeptide reads, in one-letter code: Proteasome subunit beta 1 (201 aa).

Residues 1 to 10 (MNGSPSAMKG) constitute a propeptide, removed in mature form; by autocatalysis. Residue threonine 11 is the Nucleophile of the active site.

It belongs to the peptidase T1B family. The 20S proteasome core is composed of 14 alpha and 14 beta subunits that assemble into four stacked heptameric rings, resulting in a barrel-shaped structure. The two inner rings, each composed of seven catalytic beta subunits, are sandwiched by two outer rings, each composed of seven alpha subunits. The catalytic chamber with the active sites is on the inside of the barrel. Has a gated structure, the ends of the cylinder being occluded by the N-termini of the alpha-subunits. Is capped at one or both ends by the proteasome regulatory ATPase, PAN.

The protein localises to the cytoplasm. The catalysed reaction is Cleavage of peptide bonds with very broad specificity.. The formation of the proteasomal ATPase PAN-20S proteasome complex, via the docking of the C-termini of PAN into the intersubunit pockets in the alpha-rings, triggers opening of the gate for substrate entry. Interconversion between the open-gate and close-gate conformations leads to a dynamic regulation of the 20S proteasome proteolysis activity. Component of the proteasome core, a large protease complex with broad specificity involved in protein degradation. In Thermococcus gammatolerans (strain DSM 15229 / JCM 11827 / EJ3), this protein is Proteasome subunit beta 1.